The sequence spans 456 residues: Molybdate transporter 1 (456 aa).

The next 9 helical transmembrane spans lie at 67-87 (LIFTGIYNAITGAVYGVPMPV), 110-130 (IMAAGICTGGILFVLGISGLM), 133-153 (VFNIIPLSVVRGIQLSQGLAF), 177-197 (PWLGLDGLVLALVCVLFIVLV), 225-245 (VIANVPSALLIFLLGVVLAFI), 309-329 (AASVSMTVGLMNMVGCWFGAM), 354-374 (LLGVAKLVLGLVLGGSLVGIL), 377-397 (FPVGVLGALLLFAGVELAMAA), and 417-437 (LGSNAAIGFVAGDLLYVVLWM).

It belongs to the SLC26A/SulP transporter (TC 2.A.53) family. Strongly expressed in roots. Detected in the vascular tissues of hypocotyls, in petioles and vascular tissues of cotyledons and leaves, in mesophyll cells, stamen, sepals and siliques.

The protein resides in the cell membrane. The protein localises to the endomembrane system. It localises to the mitochondrion membrane. Not inhibited by sulfate. High affinity molybdate transporter. Unable to transport sulfate. The polypeptide is Molybdate transporter 1 (MOT1) (Arabidopsis thaliana (Mouse-ear cress)).